We begin with the raw amino-acid sequence, 278 residues long: 4-deoxy-L-threo-5-hexosulose-uronate ketol-isomerase (278 aa).

Zn(2+)-binding residues include histidine 196, histidine 198, glutamate 203, and histidine 245.

It belongs to the KduI family. Homohexamer. Zn(2+) is required as a cofactor.

It carries out the reaction 5-dehydro-4-deoxy-D-glucuronate = 3-deoxy-D-glycero-2,5-hexodiulosonate. It participates in glycan metabolism; pectin degradation; 2-dehydro-3-deoxy-D-gluconate from pectin: step 4/5. In terms of biological role, catalyzes the isomerization of 5-dehydro-4-deoxy-D-glucuronate to 3-deoxy-D-glycero-2,5-hexodiulosonate. In Escherichia coli (strain UTI89 / UPEC), this protein is 4-deoxy-L-threo-5-hexosulose-uronate ketol-isomerase.